Consider the following 360-residue polypeptide: uncharacterized protein (360 aa).

4 to 22 serves as a coordination point for NAD(+); that stretch reads KVLHIGAGGFGERWCDTFL.

Could be a NAD-dependent oxidoreductase. This is an uncharacterized protein from Sinorhizobium fredii (strain NBRC 101917 / NGR234).